A 530-amino-acid chain; its full sequence is Arginine-containing cyclodipeptide synthase pthA (530 aa).

A Conserved DDXXE motif motif is present at residues 419-423; it reads DDRAE.

The protein belongs to the arginine-containing cyclodipeptide synthase family.

It catalyses the reaction L-aspartyl-tRNA(Asp) + L-arginyl-tRNA(Arg) = cyclo(L-arginyl-L-aspartyl) + tRNA(Asp) + tRNA(Arg) + 2 H(+). It functions in the pathway secondary metabolite biosynthesis. Arginine-containing cyclodipeptide synthase; part of the cluster that mediates the biosynthesis of a highly modified cyclo-arginine-aspartate dipeptide (cRD). Within the pathway, pthA acts as the scaffold-generating enzyme and is responsible for formation of the cyclo-Arg-Asp diketopiperazine (cRW) from L-arginyl-tRNA(Arg) + L-aspartyl-tRNA(Asp). Additional enzymes from the cluster then further modify the cyclo-Arg-Asp diketopiperazine (cRW) scaffold. The sequence is that of Arginine-containing cyclodipeptide synthase pthA from Penicillium thymicola.